Here is a 185-residue protein sequence, read N- to C-terminus: MAKYDKADIERRMAGAVESLKSDLSGLRTGRANTSLLDPVVVEVYGAMMPLNQVATVNAPEPRMLAVQVWDKANVSAVEKGITKANLGLNPMTDGQTVRLPMPDLTEERRKELAKLAGQYAEKAKIAIRNVRRDGMEDLKADEKAKDISEDDRKRMEDEVQKLTDKYVAEADSAAEAKEKEIMTQ.

The disordered stretch occupies residues 137 to 159; that stretch reads EDLKADEKAKDISEDDRKRMEDE.

It belongs to the RRF family.

Its subcellular location is the cytoplasm. Responsible for the release of ribosomes from messenger RNA at the termination of protein biosynthesis. May increase the efficiency of translation by recycling ribosomes from one round of translation to another. The sequence is that of Ribosome-recycling factor from Erythrobacter litoralis (strain HTCC2594).